Consider the following 225-residue polypeptide: Platelet-activating factor acetylhydrolase IB subunit beta homolog (225 aa).

It belongs to the 'GDSL' lipolytic enzyme family. Platelet-activating factor acetylhydrolase IB beta/gamma subunits subfamily. Does not interact with Lis-1.

This chain is Platelet-activating factor acetylhydrolase IB subunit beta homolog (Paf-AHalpha), found in Drosophila melanogaster (Fruit fly).